Here is a 397-residue protein sequence, read N- to C-terminus: 3-ketoacyl-CoA thiolase, mitochondrial (397 aa).

Residues 1–16 (MALLRGVFIVAAKRTP) constitute a mitochondrion; not cleaved transit peptide. Position 25 is an N6-acetyllysine; alternate (K25). An N6-succinyllysine; alternate modification is found at K25. An N6-succinyllysine modification is found at K45. C92 (acyl-thioester intermediate) is an active-site residue. T119 is subject to Phosphothreonine. Position 121 is a phosphoserine (S121). Position 127 is a phosphotyrosine (Y127). Phosphothreonine is present on T136. An N6-acetyllysine; alternate mark is found at K137, K143, K158, K171, K191, and K209. An N6-succinyllysine; alternate mark is found at K137, K143, K158, K171, K191, and K209. N6-succinyllysine occurs at positions 211, 212, and 214. CoA is bound by residues R224 and T227. Residue K240 is modified to N6-succinyllysine. Residue K241 is modified to N6-acetyllysine. S251 contacts CoA. 2 positions are modified to N6-acetyllysine: K269 and K270. K305 is modified (N6-acetyllysine; alternate). At K305 the chain carries N6-succinyllysine; alternate. Phosphoserine is present on S310. K312 is modified (N6-acetyllysine; alternate). K312 carries the N6-succinyllysine; alternate modification. Position 333 is a phosphoserine (S333). K340 is subject to N6-acetyllysine. At S344 the chain carries Phosphoserine. The residue at position 375 (K375) is an N6-acetyllysine. C382 acts as the Proton donor/acceptor in catalysis.

The protein belongs to the thiolase-like superfamily. Thiolase family. Homotetramer. Interacts with BNIP3. Expressed in liver, brown adipose tissue and heart (at protein level).

The protein localises to the mitochondrion. It catalyses the reaction an acyl-CoA + acetyl-CoA = a 3-oxoacyl-CoA + CoA. It carries out the reaction 2 acetyl-CoA = acetoacetyl-CoA + CoA. The enzyme catalyses acetyl-CoA + H2O = acetate + CoA + H(+). The catalysed reaction is propanoyl-CoA + H2O = propanoate + CoA + H(+). It catalyses the reaction butanoyl-CoA + H2O = butanoate + CoA + H(+). It carries out the reaction hexanoyl-CoA + H2O = hexanoate + CoA + H(+). The enzyme catalyses octanoyl-CoA + H2O = octanoate + CoA + H(+). The catalysed reaction is decanoyl-CoA + H2O = decanoate + CoA + H(+). It catalyses the reaction dodecanoyl-CoA + H2O = dodecanoate + CoA + H(+). It carries out the reaction tetradecanoyl-CoA + H2O = tetradecanoate + CoA + H(+). The enzyme catalyses hexadecanoyl-CoA + H2O = hexadecanoate + CoA + H(+). The protein operates within lipid metabolism; fatty acid beta-oxidation. The 3-oxoacetyl-CoA thiolase activity is inhibited by acetyl-CoA while the acetyl-CoA hydrolase activity is inhibited by acetoacetyl-CoA. Its function is as follows. In the production of energy from fats, this is one of the enzymes that catalyzes the last step of the mitochondrial beta-oxidation pathway, an aerobic process breaking down fatty acids into acetyl-CoA. Using free coenzyme A/CoA, catalyzes the thiolytic cleavage of medium- to long-chain unbranched 3-oxoacyl-CoAs into acetyl-CoA and a fatty acyl-CoA shortened by two carbon atoms. Also catalyzes the condensation of two acetyl-CoA molecules into acetoacetyl-CoA and could be involved in the production of ketone bodies. Also displays hydrolase activity on various fatty acyl-CoAs. Thereby, could be responsible for the production of acetate in a side reaction to beta-oxidation. Abolishes BNIP3-mediated apoptosis and mitochondrial damage. This Rattus norvegicus (Rat) protein is 3-ketoacyl-CoA thiolase, mitochondrial (Acaa2).